A 226-amino-acid polypeptide reads, in one-letter code: UPF0758 protein M28_Spy0816 (226 aa).

Positions 103–225 (SVLTSVQVAE…YYSFREKSTL (123 aa)) constitute an MPN domain. The Zn(2+) site is built by His174, His176, and Asp187. The JAMM motif signature appears at 174-187 (HNHPSGNIEPSSND).

This sequence belongs to the UPF0758 family.

In Streptococcus pyogenes serotype M28 (strain MGAS6180), this protein is UPF0758 protein M28_Spy0816.